The following is a 700-amino-acid chain: Transketolase (700 aa).

The residue at position 2 (Thr2) is an N-acetylthreonine. His45 provides a ligand contact to substrate. Thiamine diphosphate is bound by residues Thr48, His85, 133–135 (GPL), and Leu135. Asp177 is a Mg(2+) binding site. Thiamine diphosphate-binding residues include Gly178 and Asn207. Mg(2+)-binding residues include Asn207 and Ile209. The substrate site is built by His283, Arg378, and Ser405. His283 is a binding site for thiamine diphosphate. The Proton donor role is filled by Glu441. Phe467 serves as a coordination point for thiamine diphosphate. Substrate-binding residues include His491, Asp499, and Arg552.

This sequence belongs to the transketolase family. Homodimer. Mg(2+) is required as a cofactor. Ca(2+) serves as cofactor. The cofactor is Mn(2+). Requires Co(2+) as cofactor. It depends on thiamine diphosphate as a cofactor.

The enzyme catalyses D-sedoheptulose 7-phosphate + D-glyceraldehyde 3-phosphate = aldehydo-D-ribose 5-phosphate + D-xylulose 5-phosphate. Catalyzes the reversible transfer of a two-carbon ketol group from sedoheptulose-7-phosphate to glyceraldehyde-3-phosphate, producing xylulose-5-phosphate and ribose-5-phosphate. Catalyzes the transfer of a two-carbon ketol group from a ketose donor to an aldose acceptor, via a covalent intermediate with the cofactor thiamine pyrophosphate. The chain is Transketolase (tkt) from Mycobacterium tuberculosis (strain ATCC 25618 / H37Rv).